We begin with the raw amino-acid sequence, 843 residues long: Neuroligin-1 (843 aa).

Residues 1–45 form the signal peptide; that stretch reads MALPRCMWPNYVWRAMMACVVHRGSGAPLTLCLLGCLLQTFHVLS. Topologically, residues 46 to 697 are extracellular; the sequence is QKLDDVDPLV…DQRDYSTELS (652 aa). Asn109 carries an N-linked (GlcNAc...) (complex) asparagine glycan. 2 cysteine pairs are disulfide-bonded: Cys117/Cys153 and Cys172/Cys181. N-linked (GlcNAc...) (complex) asparagine glycosylation is found at Asn303 and Asn343. 2 disulfides stabilise this stretch: Cys342-Cys353 and Cys512-Cys546. Asn547 carries an N-linked (GlcNAc...) asparagine glycan. Positions 647 to 688 are disordered; it reads TKVPSTDITLRPTRKNSTPVTSAFPTAKQDDPKQQPSPFSVD. Residues 661–670 are compositionally biased toward polar residues; it reads KNSTPVTSAF. O-linked (GalNAc...) serine glycans are attached at residues Ser683 and Ser686. Residues 698–718 form a helical membrane-spanning segment; that stretch reads VTIAVGASLLFLNILAFAALY. Residues 719–843 lie on the Cytoplasmic side of the membrane; it reads YKKDKRRHDV…HPHSHSTTRV (125 aa). Positions 822-843 are disordered; the sequence is GGQNNTLPHPHPHPHSHSTTRV. Positions 831–843 are enriched in basic residues; the sequence is PHPHPHSHSTTRV.

Belongs to the type-B carboxylesterase/lipase family. In terms of assembly, interacts with neurexins NRXN1, NRXN2 and NRXN3. Interaction with neurexins is mediated by heparan sulfate glycan modification on neurexin. Interacts with NLGN3. Interacts (via its C-terminus) with DLG4/PSD-95 (via PDZ domain 3). Interacts with GOPC. Interacts with AIP1 and PDZRN3. The N-terminus is blocked. As to expression, expressed in brain, almost exclusively in neurons, and spinal cord. Detected in pancreas islet beta cells.

The protein resides in the cell membrane. The protein localises to the postsynaptic density. It is found in the synaptic cleft. Its subcellular location is the synaptic cell membrane. Cell surface protein involved in cell-cell-interactions via its interactions with neurexin family members. Plays a role in synapse function and synaptic signal transmission, and probably mediates its effects by recruiting and clustering other synaptic proteins. May promote the initial formation of synapses, but is not essential for this. In vitro, triggers the de novo formation of presynaptic structures. May be involved in specification of excitatory synapses. Required to maintain wakefulness quality and normal synchrony of cerebral cortex activity during wakefulness and sleep. The protein is involved in nervous system development. The polypeptide is Neuroligin-1 (Nlgn1) (Rattus norvegicus (Rat)).